The following is a 315-amino-acid chain: 3-oxoacyl-[acyl-carrier-protein] reductase 3, chloroplastic (315 aa).

Residues 1-55 constitute a chloroplast transit peptide; it reads MATTVAATKLTSLKAVKKLGFREIRQVRQWTPLQSSMPHFGSRQSFATSTVVKAQ. 77–101 is a binding site for NADP(+); it reads VTGASRGIGKAIALSLGKAGCKVLV. A substrate-binding site is contributed by Ser-209. Residue Tyr-222 is the Proton acceptor of the active site.

The protein belongs to the short-chain dehydrogenases/reductases (SDR) family. As to quaternary structure, homotetramer.

Its subcellular location is the plastid. It is found in the chloroplast. The enzyme catalyses a (3R)-hydroxyacyl-[ACP] + NADP(+) = a 3-oxoacyl-[ACP] + NADPH + H(+). It participates in lipid metabolism; fatty acid biosynthesis. The polypeptide is 3-oxoacyl-[acyl-carrier-protein] reductase 3, chloroplastic (bkr3) (Brassica napus (Rape)).